The following is a 147-amino-acid chain: uncharacterized protein (147 aa).

Residues Ile-69–Ile-89 traverse the membrane as a helical segment.

It localises to the membrane. This is an uncharacterized protein from Saccharomyces cerevisiae (strain ATCC 204508 / S288c) (Baker's yeast).